The chain runs to 287 residues: Iodotyrosine deiodinase (287 aa).

A helical membrane pass occupies residues 15 to 34; sequence HWPSLFITLALIWIVKRLFF. Residues 96–100, serine 125, and 125–126 each bind FMN; these read RRSIR and SG. 3,5-diiodo-L-tyrosine is bound by residues alanine 127, glutamate 154, tyrosine 158, and lysine 179. 3-iodo-L-tyrosine contacts are provided by alanine 127, glutamate 154, tyrosine 158, and lysine 179. FMN is bound by residues 235-237 and arginine 277; that span reads VTT.

Belongs to the nitroreductase family. As to quaternary structure, homodimer. It depends on FMN as a cofactor. In terms of tissue distribution, expressed in spermatocytes.

Its subcellular location is the cell membrane. It catalyses the reaction 2 iodide + L-tyrosine + 2 NADP(+) = 3,5-diiodo-L-tyrosine + 2 NADPH + H(+). It carries out the reaction iodide + L-tyrosine + NADP(+) = 3-iodo-L-tyrosine + NADPH. The enzyme catalyses 3-iodo-L-tyrosine + iodide + NADP(+) = 3,5-diiodo-L-tyrosine + NADPH + H(+). The catalysed reaction is L-tyrosine + chloride + NADP(+) = 3-chloro-L-tyrosine + NADPH. It catalyses the reaction bromide + L-tyrosine + NADP(+) = 3-bromo-L-tyrosine + NADPH. Catalyzes the dehalogenation of halotyrosines such as 3-bromo-L-tyrosine, 3-chloro-L-tyrosine, 3-iodo-L-tyrosine and 3,5-diiodo-L-tyrosine. Activity towards 3-fluoro-L-tyrosine is weak. Important for male and female fertility. May be involved in maintaining the viability of sperm, both during development in the testes and storage in the female spermatheca. The chain is Iodotyrosine deiodinase from Drosophila melanogaster (Fruit fly).